We begin with the raw amino-acid sequence, 184 residues long: Photosystem I assembly protein Ycf4 (184 aa).

A run of 2 helical transmembrane segments spans residues 22-42 and 64-84; these read FCWA…GISS and IVMS…WSTI.

The protein belongs to the Ycf4 family.

The protein localises to the plastid. It localises to the chloroplast thylakoid membrane. Functionally, seems to be required for the assembly of the photosystem I complex. This chain is Photosystem I assembly protein Ycf4, found in Piper cenocladum (Ant piper).